Here is a 355-residue protein sequence, read N- to C-terminus: Probable GTP 3',8-cyclase (355 aa).

In terms of domain architecture, Radical SAM core spans 5–233 (AYGRPLKDLR…GRLHNRRVYR (229 aa)). Position 14 (Arg-14) interacts with GTP. 3 residues coordinate [4Fe-4S] cluster: Cys-21, Cys-25, and Cys-28. A GTP-binding site is contributed by Lys-69. Gly-73 provides a ligand contact to S-adenosyl-L-methionine. Thr-97 is a GTP binding site. Ser-121 contacts S-adenosyl-L-methionine. Lys-157 contributes to the GTP binding site. The [4Fe-4S] cluster site is built by Cys-252 and Cys-255. Residue 257 to 259 (RVR) coordinates GTP. Cys-269 contributes to the [4Fe-4S] cluster binding site.

Belongs to the radical SAM superfamily. MoaA family. [4Fe-4S] cluster serves as cofactor.

The enzyme catalyses GTP + AH2 + S-adenosyl-L-methionine = (8S)-3',8-cyclo-7,8-dihydroguanosine 5'-triphosphate + 5'-deoxyadenosine + L-methionine + A + H(+). It functions in the pathway cofactor biosynthesis; molybdopterin biosynthesis. Catalyzes the cyclization of GTP to (8S)-3',8-cyclo-7,8-dihydroguanosine 5'-triphosphate. The polypeptide is Probable GTP 3',8-cyclase (Aeropyrum pernix (strain ATCC 700893 / DSM 11879 / JCM 9820 / NBRC 100138 / K1)).